The sequence spans 274 residues: Thiamine kinase (274 aa).

This sequence belongs to the thiamine kinase family.

The catalysed reaction is thiamine + ATP = thiamine phosphate + ADP + H(+). It participates in cofactor biosynthesis; thiamine diphosphate biosynthesis; thiamine phosphate from thiamine: step 1/1. In terms of biological role, catalyzes the ATP-dependent phosphorylation of thiamine to thiamine phosphate. Is involved in thiamine salvage. The polypeptide is Thiamine kinase (Escherichia coli O81 (strain ED1a)).